Reading from the N-terminus, the 193-residue chain is Peptidyl-tRNA hydrolase (193 aa).

Residue Y14 coordinates tRNA. H19 serves as the catalytic Proton acceptor. TRNA-binding residues include F64, N66, and N112.

Belongs to the PTH family. In terms of assembly, monomer.

Its subcellular location is the cytoplasm. The catalysed reaction is an N-acyl-L-alpha-aminoacyl-tRNA + H2O = an N-acyl-L-amino acid + a tRNA + H(+). Its function is as follows. Hydrolyzes ribosome-free peptidyl-tRNAs (with 1 or more amino acids incorporated), which drop off the ribosome during protein synthesis, or as a result of ribosome stalling. In terms of biological role, catalyzes the release of premature peptidyl moieties from peptidyl-tRNA molecules trapped in stalled 50S ribosomal subunits, and thus maintains levels of free tRNAs and 50S ribosomes. The polypeptide is Peptidyl-tRNA hydrolase (Bartonella henselae (strain ATCC 49882 / DSM 28221 / CCUG 30454 / Houston 1) (Rochalimaea henselae)).